A 506-amino-acid chain; its full sequence is Bifunctional purine biosynthesis protein PurH (506 aa).

In terms of domain architecture, MGS-like spans 1-146 (MARLALLSVS…KNFAHLTVLC (146 aa)).

The protein belongs to the PurH family.

It catalyses the reaction (6R)-10-formyltetrahydrofolate + 5-amino-1-(5-phospho-beta-D-ribosyl)imidazole-4-carboxamide = 5-formamido-1-(5-phospho-D-ribosyl)imidazole-4-carboxamide + (6S)-5,6,7,8-tetrahydrofolate. It carries out the reaction IMP + H2O = 5-formamido-1-(5-phospho-D-ribosyl)imidazole-4-carboxamide. It participates in purine metabolism; IMP biosynthesis via de novo pathway; 5-formamido-1-(5-phospho-D-ribosyl)imidazole-4-carboxamide from 5-amino-1-(5-phospho-D-ribosyl)imidazole-4-carboxamide (10-formyl THF route): step 1/1. Its pathway is purine metabolism; IMP biosynthesis via de novo pathway; IMP from 5-formamido-1-(5-phospho-D-ribosyl)imidazole-4-carboxamide: step 1/1. The protein is Bifunctional purine biosynthesis protein PurH of Trichormus variabilis (strain ATCC 29413 / PCC 7937) (Anabaena variabilis).